The chain runs to 324 residues: Casein kinase I (324 aa).

Residues 9–278 (YALGKKLGSG…LRRLLKDLFI (270 aa)) enclose the Protein kinase domain. Residues 15-23 (LGSGSFGDI) and lysine 38 each bind ATP. Aspartate 128 acts as the Proton acceptor in catalysis.

The protein belongs to the protein kinase superfamily. CK1 Ser/Thr protein kinase family. Casein kinase I subfamily. As to quaternary structure, interacts with rhoptry protein RON3; the interaction is direct. Interacts with CK2alpha; the interaction is direct. Interacts with nucleosome assembly protein NAPL. Interacts with RAB5b. Interacts with host GAPVD1. Interacts with host SNX22. Mg(2+) is required as a cofactor.

It localises to the cytoplasm. Its subcellular location is the cytoplasmic vesicle. It is found in the secretory vesicle. The protein localises to the microneme. The protein resides in the secreted. It localises to the host cell surface. The catalysed reaction is L-seryl-[protein] + ATP = O-phospho-L-seryl-[protein] + ADP + H(+). It catalyses the reaction L-threonyl-[protein] + ATP = O-phospho-L-threonyl-[protein] + ADP + H(+). Its function is as follows. Serine/threonine-protein kinase likely to be involved in many cellular processes. Phosphorylates rhoptry protein RON3, nucleosome assembly protein NAPL and DNA/RNA-binding protein ALBA4 in vitro. The protein is Casein kinase I of Plasmodium falciparum (isolate Dd2).